We begin with the raw amino-acid sequence, 431 residues long: Elongation factor 1-gamma (431 aa).

The GST N-terminal domain maps to 2–84 (VKGTLYTYPE…LLANEQLRGG (83 aa)). The GST C-terminal domain maps to 86 to 212 (CPFVQAQVQQ…YKLCEKALVF (127 aa)). The disordered stretch occupies residues 223 to 261 (KTGAAKPQQQAQQQKQEKKPKEKKEAPKKAAEPAEELDA). Low complexity predominate over residues 226–236 (AAKPQQQAQQQ). A compositionally biased stretch (basic and acidic residues) spans 237–254 (KQEKKPKEKKEAPKKAAE). The EF-1-gamma C-terminal domain maps to 272 to 431 (SKDPFDALPK…RKFNQGKIFK (160 aa)). S294 is modified (phosphoserine).

In terms of assembly, interacts with microtubules. May interact with BicDR; the interaction is probably indirect. Interacts (via C-terminus) with Doa; the interaction is probably direct, is transient and leads to phosphorylation of eEF1gamma by Doa. EF-1 is composed of four subunits: alpha, beta, delta, and gamma. Post-translationally, phosphorylated on Ser-294 by LAMMER kinases, including Doa. Phosphorylation on Ser-294 by Doa is required for negative regulation of microtubule-based transport.

It localises to the cytoplasm. The protein resides in the nucleus. The protein localises to the cytoskeleton. Functionally, microtubule binding protein involved in regulation of microtubule-based transport. Probably plays a role in anchoring the EF-1 complex to other cellular components. Probably involved in formation and/or development of mechanosensory organs during metamorphosis. Required for cellular and organismal viability. Not essential for the innate immune response to bacterial infection. This is Elongation factor 1-gamma from Drosophila melanogaster (Fruit fly).